The primary structure comprises 229 residues: Ribonuclease 3 (229 aa).

Residues 5 to 127 (LDRLERKLGY…LIGAIYLDTG (123 aa)) enclose the RNase III domain. Glu-40 provides a ligand contact to Mg(2+). Residue Asp-44 is part of the active site. Residues Asp-113 and Glu-116 each contribute to the Mg(2+) site. Residue Glu-116 is part of the active site. Positions 154–224 (DPKTRLQEFL…AAAALVALGV (71 aa)) constitute a DRBM domain.

Belongs to the ribonuclease III family. In terms of assembly, homodimer. It depends on Mg(2+) as a cofactor.

It is found in the cytoplasm. The catalysed reaction is Endonucleolytic cleavage to 5'-phosphomonoester.. Digests double-stranded RNA. Involved in the processing of primary rRNA transcript to yield the immediate precursors to the large and small rRNAs (23S and 16S). Processes some mRNAs, and tRNAs when they are encoded in the rRNA operon. Processes pre-crRNA and tracrRNA of type II CRISPR loci if present in the organism. The sequence is that of Ribonuclease 3 from Pseudomonas paraeruginosa (strain DSM 24068 / PA7) (Pseudomonas aeruginosa (strain PA7)).